Reading from the N-terminus, the 204-residue chain is MRLFVGLGNPGTKYQGNRHNIGFMVVDEIARRHGFAPWRRRFQGEASEGALDQERVVLLKPATYMNESGNAVQDAARFFKLTEGDVVVFHDEIELPPAKVRVKVGGGIAGHNGLRSISAHIGNEYRRVRLGVGHPGVKERVHAHVLNDFAKSERPWVEALVDVVAENAALLVTARDSAFQNKVHLAMQAKGFVEKDAKGDNGGK.

Tyrosine 14 provides a ligand contact to tRNA. The Proton acceptor role is filled by histidine 19. The tRNA site is built by tyrosine 64, asparagine 66, and asparagine 112.

Belongs to the PTH family. Monomer.

Its subcellular location is the cytoplasm. The enzyme catalyses an N-acyl-L-alpha-aminoacyl-tRNA + H2O = an N-acyl-L-amino acid + a tRNA + H(+). Its function is as follows. Hydrolyzes ribosome-free peptidyl-tRNAs (with 1 or more amino acids incorporated), which drop off the ribosome during protein synthesis, or as a result of ribosome stalling. In terms of biological role, catalyzes the release of premature peptidyl moieties from peptidyl-tRNA molecules trapped in stalled 50S ribosomal subunits, and thus maintains levels of free tRNAs and 50S ribosomes. The chain is Peptidyl-tRNA hydrolase from Nitrobacter hamburgensis (strain DSM 10229 / NCIMB 13809 / X14).